A 258-amino-acid chain; its full sequence is NAD(P)H-hydrate epimerase (258 aa).

The YjeF N-terminal domain maps to 15 to 244; that stretch reads AFQLDQELMS…RIAKEYGIED (230 aa). (6S)-NADPHX is bound at residue 75–79; the sequence is NNGGD. The K(+) site is built by N76 and D145. (6S)-NADPHX is bound by residues 149 to 155 and D181; that span reads GFSFKPP. S184 is a K(+) binding site.

This sequence belongs to the NnrE/AIBP family. The cofactor is K(+).

It localises to the cytoplasm. It is found in the mitochondrion. It carries out the reaction (6R)-NADHX = (6S)-NADHX. It catalyses the reaction (6R)-NADPHX = (6S)-NADPHX. In terms of biological role, catalyzes the epimerization of the S- and R-forms of NAD(P)HX, a damaged form of NAD(P)H that is a result of enzymatic or heat-dependent hydration. This is a prerequisite for the S-specific NAD(P)H-hydrate dehydratase to allow the repair of both epimers of NAD(P)HX. This Candida albicans (strain WO-1) (Yeast) protein is NAD(P)H-hydrate epimerase.